The chain runs to 200 residues: uncharacterized protein (200 aa).

This is an uncharacterized protein from Ostreid herpesvirus 1 (isolate France) (OsHV-1).